Consider the following 430-residue polypeptide: Glutamate-1-semialdehyde 2,1-aminomutase (430 aa).

The residue at position 267 (Lys267) is an N6-(pyridoxal phosphate)lysine.

Belongs to the class-III pyridoxal-phosphate-dependent aminotransferase family. HemL subfamily. As to quaternary structure, homodimer. Pyridoxal 5'-phosphate is required as a cofactor.

The protein localises to the cytoplasm. The catalysed reaction is (S)-4-amino-5-oxopentanoate = 5-aminolevulinate. It participates in porphyrin-containing compound metabolism; protoporphyrin-IX biosynthesis; 5-aminolevulinate from L-glutamyl-tRNA(Glu): step 2/2. The polypeptide is Glutamate-1-semialdehyde 2,1-aminomutase (Thermomicrobium roseum (strain ATCC 27502 / DSM 5159 / P-2)).